The following is a 368-amino-acid chain: Glutaminyl-peptide cyclotransferase (368 aa).

The first 23 residues, 1–23, serve as a signal peptide directing secretion; sequence MAGERRDSKAAAFFCLAWALCLA. N-linked (GlcNAc...) asparagine glycosylation occurs at Asn53. A disulfide bridge connects residues Cys143 and Cys169. Asp164 contributes to the Zn(2+) binding site. The Proton acceptor role is filled by Glu207. Glu208 lines the Zn(2+) pocket. Asp254 functions as the Proton acceptor in the catalytic mechanism. Asn292 is a glycosylation site (N-linked (GlcNAc...) asparagine). His336 serves as a coordination point for Zn(2+). N-linked (GlcNAc...) asparagine glycosylation is present at Asn352.

It belongs to the glutaminyl-peptide cyclotransferase family. Expressed by the venom gland.

It localises to the secreted. The catalysed reaction is N-terminal L-glutaminyl-[peptide] = N-terminal 5-oxo-L-prolyl-[peptide] + NH4(+). Functionally, responsible for the biosynthesis of pyroglutamyl peptides. Has a bias against acidic and tryptophan residues adjacent to the N-terminal glutaminyl residue and a lack of importance of chain length after the second residue. Also catalyzes N-terminal pyroglutamate formation. The polypeptide is Glutaminyl-peptide cyclotransferase (QPCT) (Boiga irregularis (Brown tree snake)).